The following is a 155-amino-acid chain: Ribosome maturation factor RimP (155 aa).

It belongs to the RimP family.

Its subcellular location is the cytoplasm. In terms of biological role, required for maturation of 30S ribosomal subunits. The chain is Ribosome maturation factor RimP from Parasynechococcus marenigrum (strain WH8102).